Reading from the N-terminus, the 158-residue chain is SsrA-binding protein (158 aa).

The segment at 134-158 is disordered; that stretch reads KLHDKRETEKERDWNRQKSRLLKTG. Positions 137–149 are enriched in basic and acidic residues; the sequence is DKRETEKERDWNR.

The protein belongs to the SmpB family.

The protein localises to the cytoplasm. Required for rescue of stalled ribosomes mediated by trans-translation. Binds to transfer-messenger RNA (tmRNA), required for stable association of tmRNA with ribosomes. tmRNA and SmpB together mimic tRNA shape, replacing the anticodon stem-loop with SmpB. tmRNA is encoded by the ssrA gene; the 2 termini fold to resemble tRNA(Ala) and it encodes a 'tag peptide', a short internal open reading frame. During trans-translation Ala-aminoacylated tmRNA acts like a tRNA, entering the A-site of stalled ribosomes, displacing the stalled mRNA. The ribosome then switches to translate the ORF on the tmRNA; the nascent peptide is terminated with the 'tag peptide' encoded by the tmRNA and targeted for degradation. The ribosome is freed to recommence translation, which seems to be the essential function of trans-translation. This is SsrA-binding protein from Allorhizobium ampelinum (strain ATCC BAA-846 / DSM 112012 / S4) (Agrobacterium vitis (strain S4)).